A 457-amino-acid polypeptide reads, in one-letter code: DDB1- and CUL4-associated factor 10 (457 aa).

WD repeat units follow at residues Arg65–Thr104, Ala108–Cys146, Gly150–Cys189, and Phe195–Glu234. A compositionally biased stretch (low complexity) spans Thr246–Pro265. The segment at Thr246–Glu304 is disordered. Residues Arg281 to Asn292 show a composition bias toward polar residues. WD repeat units lie at residues Asp306–Thr346, Val368–Val406, and Ser424–Phe457.

This sequence belongs to the WD repeat DCAF10 family.

The protein operates within protein modification; protein ubiquitination. Functionally, may function as a substrate receptor for CUL4-DDB1 E3 ubiquitin-protein ligase complex. This chain is DDB1- and CUL4-associated factor 10 (dcaf10), found in Xenopus laevis (African clawed frog).